The chain runs to 458 residues: tRNA modification GTPase MnmE (458 aa).

The (6S)-5-formyl-5,6,7,8-tetrahydrofolate site is built by R22, E84, and R123. The TrmE-type G domain occupies 220–379 (GIATAIIGRP…LETAIADLFF (160 aa)). N230 provides a ligand contact to K(+). GTP-binding positions include 230–235 (NVGKSS), 249–255 (TDIAGTT), and 274–277 (DTAG). S234 contributes to the Mg(2+) binding site. Residues T249, I251, and T254 each contribute to the K(+) site. Position 255 (T255) interacts with Mg(2+). (6S)-5-formyl-5,6,7,8-tetrahydrofolate is bound at residue K458.

This sequence belongs to the TRAFAC class TrmE-Era-EngA-EngB-Septin-like GTPase superfamily. TrmE GTPase family. As to quaternary structure, homodimer. Heterotetramer of two MnmE and two MnmG subunits. Requires K(+) as cofactor.

Its subcellular location is the cytoplasm. Functionally, exhibits a very high intrinsic GTPase hydrolysis rate. Involved in the addition of a carboxymethylaminomethyl (cmnm) group at the wobble position (U34) of certain tRNAs, forming tRNA-cmnm(5)s(2)U34. The sequence is that of tRNA modification GTPase MnmE from Bacillus cereus (strain ATCC 10987 / NRS 248).